Reading from the N-terminus, the 221-residue chain is MSDGDYDYLIKFLALGDSGVGKTSVLYQYTDGKFNSKFITTVGIDFREKRVVYRANGPDGAIGRGQRIHLQLWDTAGQERFRSLTTAFFRDAMGFLLLFDLTNEQSFLNVRNWISQLQMHAYCENPDIVLCGNKSDLEDQRVVKEEEARGLAEKYGIPYFETSAANGTNVSLAIETLLDLIMKRMERCVDKSWIPEGVVRSNGHTSADPLNEEKEKGSCGC.

Ser2 bears the N-acetylserine mark. At Ser2 the chain carries Phosphoserine. Residue 16–24 (GDSGVGKTS) coordinates GTP. The short motif at 38-46 (FITTVGIDF) is the Effector region element. GTP contacts are provided by residues 74-78 (DTAGQ), 133-136 (NKSD), and 163-165 (SAA). Residues Cys123 and Cys188 are joined by a disulfide bond. Residues 202 to 221 (NGHTSADPLNEEKEKGSCGC) are disordered. The segment covering 211 to 221 (NEEKEKGSCGC) has biased composition (basic and acidic residues). S-geranylgeranyl cysteine attachment occurs at residues Cys219 and Cys221. Cys221 carries the cysteine methyl ester modification.

Belongs to the small GTPase superfamily. Rab family. Binds SYTL1, SLAC2B, MYRIP, SYTL3, SYTL4 and SYTL5. Interacts with RPH3A and RPH3A. Binds MLPH and SYTL2. Interacts with UNC13D. Does not interact with the BLOC-3 complex (heterodimer of HPS1 and HPS4). Interacts (GDP-bound form preferentially) with DENND10.

The protein resides in the membrane. It localises to the melanosome. The protein localises to the late endosome. Its subcellular location is the lysosome. The catalysed reaction is GTP + H2O = GDP + phosphate + H(+). Its activity is regulated as follows. Regulated by guanine nucleotide exchange factors (GEFs) which promote the exchange of bound GDP for free GTP, GTPase activating proteins (GAPs) which increase the GTP hydrolysis activity, and GDP dissociation inhibitors which inhibit the dissociation of the nucleotide from the GTPase. Activated by GEFs such as DENND10. Small GTPase which cycles between active GTP-bound and inactive GDP-bound states. In its active state, binds to a variety of effector proteins to regulate homeostasis of late endocytic pathway, including endosomal positioning, maturation and secretion. Plays a role in cytotoxic granule exocytosis in lymphocytes. Required for both granule maturation and granule docking and priming at the immunologic synapse. This is Ras-related protein Rab-27A (RAB27A) from Sus scrofa (Pig).